The following is a 357-amino-acid chain: Putative DNA directed RNA polymerase subunit R470 (357 aa).

This sequence belongs to the archaeal Rpo11/eukaryotic RPB11/RPC19 RNA polymerase subunit family.

It is found in the virion. The catalysed reaction is RNA(n) + a ribonucleoside 5'-triphosphate = RNA(n+1) + diphosphate. The protein is Putative DNA directed RNA polymerase subunit R470 of Acanthamoeba polyphaga mimivirus (APMV).